A 409-amino-acid polypeptide reads, in one-letter code: Nucleoprotein (409 aa).

2 disordered regions span residues 1-84 (MASG…KGGR) and 121-194 (ADTK…DSGD). The span at 15–31 (PVIKLGGPKPPKVGSSG) shows a compositional bias: low complexity. Positions 29 to 160 (SSGNASWFQA…GNFRWDFIPL (132 aa)) are RNA-binding. The CoV N NTD domain maps to 31–156 (GNASWFQAIK…GGPDGNFRWD (126 aa)). The segment covering 70–84 (YWRRQARFKPGKGGR) has biased composition (basic residues). A compositionally biased stretch (low complexity) spans 162–179 (RGRSGRSTAASSAAASRA). Residues 180-192 (PSREGSRGRRSDS) show a composition bias toward basic and acidic residues. Residues Ser-190 and Ser-192 each carry the phosphoserine; by host modification. The 117-residue stretch at 215 to 331 (TKAKADEMAH…QCVDGVGTRP (117 aa)) folds into the CoV N CTD domain. Positions 226-333 (RYCKRTIPPN…VDGVGTRPKD (108 aa)) are dimerization. 2 cysteine pairs are disulfide-bonded: Cys-281/Cys-308 and Cys-320/Cys-323. The disordered stretch occupies residues 327 to 396 (VGTRPKDDEP…QLEFYDEPKV (70 aa)). Basic residues predominate over residues 358–367 (QRPKKEKKLK). Positions 368 to 384 (KQDDEADKALTSDEERN) are enriched in basic and acidic residues. Phosphothreonine; by host is present on Thr-378. The residue at position 379 (Ser-379) is a Phosphoserine; by host.

This sequence belongs to the gammacoronavirus nucleocapsid protein family. In terms of assembly, homooligomer. Both monomeric and oligomeric forms interact with RNA. Interacts with protein M. Interacts with NSP3; this interaction serves to tether the genome to the newly translated replicase-transcriptase complex at a very early stage of infection. Post-translationally, ADP-ribosylated. The ADP-ribosylation is retained in the virion during infection. In terms of processing, phosphorylated on serine and threonine residues.

It localises to the virion. Its subcellular location is the host endoplasmic reticulum-Golgi intermediate compartment. It is found in the host Golgi apparatus. Packages the positive strand viral genome RNA into a helical ribonucleocapsid (RNP) and plays a fundamental role during virion assembly through its interactions with the viral genome and membrane protein M. Plays an important role in enhancing the efficiency of subgenomic viral RNA transcription as well as viral replication. This chain is Nucleoprotein, found in Gallus gallus (Chicken).